The following is a 326-amino-acid chain: ATP synthase subunit gamma, mitochondrial (326 aa).

The N-terminal 45 residues, Met1–Ser45, are a transit peptide targeting the mitochondrion.

This sequence belongs to the ATPase gamma chain family. As to quaternary structure, F-type ATPases have 2 components, CF(1) - the catalytic core - and CF(0) - the membrane proton channel. CF(1) has five subunits: alpha(3), beta(3), gamma(1), delta(1), epsilon(1). CF(0) has three main subunits: a, b and c.

The protein resides in the mitochondrion. Its subcellular location is the mitochondrion inner membrane. In terms of biological role, mitochondrial membrane ATP synthase (F(1)F(0) ATP synthase or Complex V) produces ATP from ADP in the presence of a proton gradient across the membrane which is generated by electron transport complexes of the respiratory chain. F-type ATPases consist of two structural domains, F(1) - containing the extramembraneous catalytic core, and F(0) - containing the membrane proton channel, linked together by a central stalk and a peripheral stalk. During catalysis, ATP synthesis in the catalytic domain of F(1) is coupled via a rotary mechanism of the central stalk subunits to proton translocation. Part of the complex F(1) domain and the central stalk which is part of the complex rotary element. The gamma subunit protrudes into the catalytic domain formed of alpha(3)beta(3). Rotation of the central stalk against the surrounding alpha(3)beta(3) subunits leads to hydrolysis of ATP in three separate catalytic sites on the beta subunits. The protein is ATP synthase subunit gamma, mitochondrial (ATPC) of Ipomoea batatas (Sweet potato).